The sequence spans 78 residues: D-alanyl carrier protein (78 aa).

The Carrier domain occupies 1–78 (MEFKEQVLDL…KIVEALEELR (78 aa)). Ser-36 carries the post-translational modification O-(pantetheine 4'-phosphoryl)serine.

This sequence belongs to the DltC family. Post-translationally, 4'-phosphopantetheine is transferred from CoA to a specific serine of apo-DCP.

The protein resides in the cytoplasm. It functions in the pathway cell wall biogenesis; lipoteichoic acid biosynthesis. Functionally, carrier protein involved in the D-alanylation of lipoteichoic acid (LTA). The loading of thioester-linked D-alanine onto DltC is catalyzed by D-alanine--D-alanyl carrier protein ligase DltA. The DltC-carried D-alanyl group is further transferred to cell membrane phosphatidylglycerol (PG) by forming an ester bond, probably catalyzed by DltD. D-alanylation of LTA plays an important role in modulating the properties of the cell wall in Gram-positive bacteria, influencing the net charge of the cell wall. The polypeptide is D-alanyl carrier protein (Staphylococcus haemolyticus (strain JCSC1435)).